The following is a 25-amino-acid chain: Xenoposin precursor fragment R2 (25 aa).

In terms of tissue distribution, expressed by the skin glands.

Its subcellular location is the secreted. Functionally, antimicrobial peptide. The chain is Xenoposin precursor fragment R2 from Xenopus ruwenzoriensis (Uganda clawed frog).